Reading from the N-terminus, the 264-residue chain is Somatomedin-B and thrombospondin type-1 domain-containing protein (264 aa).

An N-terminal signal peptide occupies residues 1 to 20 (MKTLWMVLCALARLWPGALA). The SMB domain occupies 24 to 75 (EAGRCCPGRDPACFARGWRLDRVYGTCFCDQACRLTGDCCFDYDRACPARPC). Disulfide bonds link cysteine 28–cysteine 36, cysteine 28–cysteine 52, cysteine 36–cysteine 70, cysteine 50–cysteine 52, cysteine 50–cysteine 63, cysteine 56–cysteine 62, and cysteine 63–cysteine 70. Positions 74–125 (PCFVGEWSPWSGCAGQCQPTTRVRRRSVRQEPLNGGAPCPPLEERAGCLEYS) constitute a TSP type-1 domain. An N-linked (GlcNAc...) asparagine glycan is attached at asparagine 227.

This sequence belongs to the thrombospondin family.

It localises to the secreted. The protein resides in the extracellular space. It is found in the extracellular matrix. This chain is Somatomedin-B and thrombospondin type-1 domain-containing protein (Sbspon), found in Mus musculus (Mouse).